The sequence spans 152 residues: Transcriptional regulator MraZ (152 aa).

SpoVT-AbrB domains are found at residues 5–52 (ASAI…PLHE) and 81–124 (AQDC…EESA).

It belongs to the MraZ family. In terms of assembly, forms oligomers.

The protein localises to the cytoplasm. Its subcellular location is the nucleoid. The chain is Transcriptional regulator MraZ from Shewanella frigidimarina (strain NCIMB 400).